We begin with the raw amino-acid sequence, 270 residues long: Cystinosin homolog (270 aa).

Positions 9 to 75 (LEISYEIVGW…LYFSPVIQKQ (67 aa)) constitute a PQ-loop 1 domain. A helical transmembrane segment spans residues 14–34 (EIVGWIAFASWSISFYPQLIL). Asn-52 carries N-linked (GlcNAc...) asparagine glycosylation. 3 helical membrane passes run 93 to 113 (VAFS…IFIY), 123 to 143 (LAIG…FIAL), and 148 to 168 (WLWL…VKYI). A PQ-loop 2 domain is found at 151 to 213 (LISIFNSIQV…IQSIDQNSWK (63 aa)). Asn-174 carries N-linked (GlcNAc...) asparagine glycosylation. Transmembrane regions (helical) follow at residues 180–200 (TVGW…ANYL) and 223–243 (LLSL…YVLY). Residues 250-270 (KSPETGEESNEPLIDSSHEHV) are disordered.

Belongs to the cystinosin (TC 2.A.43.1) family.

It is found in the lysosome membrane. Functionally, thought to transport cystine out of lysosomes. The chain is Cystinosin homolog from Arabidopsis thaliana (Mouse-ear cress).